Reading from the N-terminus, the 585-residue chain is ATP-dependent lipid A-core flippase (585 aa).

The next 6 helical transmembrane spans lie at 25–45, 63–83, 127–146, 150–170, 250–270, and 277–297; these read FLAALACMGVASLAEPVFPAI, WLFYPLAIMGIFLVRAIFGFL, IAYDVTGVAGAATNALTSLI, LSIVGLLVWLLWLNWQLTLIT, QSPLVQFFAASGVAIIMGVAL, and QTTVGSFVSFVTAMLMLMAPL. Residues 26 to 309 enclose the ABC transmembrane type-1 domain; that stretch reads LAALACMGVA…VTDVNAPIQR (284 aa). The 237-residue stretch at 341-577 folds into the ABC transporter domain; the sequence is VEFDGVTFTY…DGLYARLYRM (237 aa). ATP is bound at residue 375–382; that stretch reads GPSGSGKT.

It belongs to the ABC transporter superfamily. Lipid exporter (TC 3.A.1.106) family. As to quaternary structure, homodimer.

The protein resides in the cell inner membrane. The enzyme catalyses ATP + H2O + lipid A-core oligosaccharideSide 1 = ADP + phosphate + lipid A-core oligosaccharideSide 2.. Functionally, involved in lipopolysaccharide (LPS) biosynthesis. Translocates lipid A-core from the inner to the outer leaflet of the inner membrane. Transmembrane domains (TMD) form a pore in the inner membrane and the ATP-binding domain (NBD) is responsible for energy generation. This Dechloromonas aromatica (strain RCB) protein is ATP-dependent lipid A-core flippase.